The primary structure comprises 49 residues: Thymopoietin-1 (49 aa).

Positions 4–47 constitute an LEM-like domain; sequence LEDPSVLTKEKLKSELVANNVTLPAGEQRKDVYVELYLQHLTAL. A biological activity region spans residues 32–36; the sequence is RKDVY.

The protein belongs to the thymopoietin family.

Functionally, hormone of the thymus with pleiotropic actions on prothymocytes, mature T-cells, the nicotinic acetylcholine receptor, and pituitary corticotrophs. The protein is Thymopoietin-1 of Bos taurus (Bovine).